A 447-amino-acid polypeptide reads, in one-letter code: Probable glycine dehydrogenase (decarboxylating) subunit 1 (447 aa).

Belongs to the GcvP family. N-terminal subunit subfamily. The glycine cleavage system is composed of four proteins: P, T, L and H. In this organism, the P 'protein' is a heterodimer of two subunits.

It carries out the reaction N(6)-[(R)-lipoyl]-L-lysyl-[glycine-cleavage complex H protein] + glycine + H(+) = N(6)-[(R)-S(8)-aminomethyldihydrolipoyl]-L-lysyl-[glycine-cleavage complex H protein] + CO2. Its function is as follows. The glycine cleavage system catalyzes the degradation of glycine. The P protein binds the alpha-amino group of glycine through its pyridoxal phosphate cofactor; CO(2) is released and the remaining methylamine moiety is then transferred to the lipoamide cofactor of the H protein. The sequence is that of Probable glycine dehydrogenase (decarboxylating) subunit 1 from Bacillus mycoides (strain KBAB4) (Bacillus weihenstephanensis).